Reading from the N-terminus, the 320-residue chain is Phosphate acyltransferase (320 aa).

The protein belongs to the PlsX family. As to quaternary structure, homodimer. Probably interacts with PlsY.

Its subcellular location is the cytoplasm. The catalysed reaction is a fatty acyl-[ACP] + phosphate = an acyl phosphate + holo-[ACP]. Its pathway is lipid metabolism; phospholipid metabolism. Its function is as follows. Catalyzes the reversible formation of acyl-phosphate (acyl-PO(4)) from acyl-[acyl-carrier-protein] (acyl-ACP). This enzyme utilizes acyl-ACP as fatty acyl donor, but not acyl-CoA. The protein is Phosphate acyltransferase of Syntrophomonas wolfei subsp. wolfei (strain DSM 2245B / Goettingen).